Here is a 442-residue protein sequence, read N- to C-terminus: Probable carboxypeptidase PADG_04062 (442 aa).

A signal peptide spans 1–20; the sequence is MKLQYLVALLSVQAVPPVTA. An N-linked (GlcNAc...) asparagine glycan is attached at asparagine 102. Aspartate 160 is a Zn(2+) binding site. Glutamate 192 serves as the catalytic Proton acceptor. Glutamate 193 is a binding site for Zn(2+). Asparagine 343 is a glycosylation site (N-linked (GlcNAc...) asparagine).

This sequence belongs to the peptidase M20A family. Zn(2+) serves as cofactor.

It is found in the secreted. The polypeptide is Probable carboxypeptidase PADG_04062 (Paracoccidioides brasiliensis (strain Pb18)).